The sequence spans 32 residues: Kappa-conotoxin SrXIA (32 aa).

4 disulfides stabilise this stretch: cysteine 1/cysteine 15, cysteine 8/cysteine 20, cysteine 14/cysteine 24, and cysteine 19/cysteine 28. 4-carboxyglutamate occurs at positions 9 and 10. At proline 32 the chain carries Proline amide.

The protein belongs to the conotoxin I2 superfamily. Expressed by the venom duct.

Its subcellular location is the secreted. Kappa-conotoxins bind and inhibit voltage-gated potassium channels. This toxin inhibits Kv1.2/KCNA2 and Kv1.6/KCNA6. Produces stiffening of body, limbs and tail when injected intracranially into mice. This Conus spurius (Alphabet cone) protein is Kappa-conotoxin SrXIA.